Reading from the N-terminus, the 128-residue chain is UPF0102 protein Mext_0406 (128 aa).

Belongs to the UPF0102 family.

The protein is UPF0102 protein Mext_0406 of Methylorubrum extorquens (strain PA1) (Methylobacterium extorquens).